A 354-amino-acid polypeptide reads, in one-letter code: Arginase-2, mitochondrial (354 aa).

A mitochondrion-targeting transit peptide spans 1-22 (MSLRSHLSRLLRTQVHSVRKKS). H120, D143, H145, and D147 together coordinate Mn(2+). Residues 145–149 (HADIN), 156–158 (SGN), and D202 contribute to the substrate site. The Mn(2+) site is built by D251 and D253. Residues T265 and E296 each coordinate substrate. The disordered stretch occupies residues 332-354 (IVYDQLPTPSSPDESESEERVRI).

Belongs to the arginase family. In terms of assembly, homotrimer. The cofactor is Mn(2+).

It localises to the mitochondrion. The enzyme catalyses L-arginine + H2O = urea + L-ornithine. It participates in nitrogen metabolism; urea cycle; L-ornithine and urea from L-arginine: step 1/1. Its function is as follows. May play a role in the regulation of extra-urea cycle arginine metabolism and also in down-regulation of nitric oxide synthesis. Extrahepatic arginase functions to regulate L-arginine bioavailability to nitric oxid synthase (NOS). Arginine metabolism is a critical regulator of innate and adaptive immune responses. Seems to be involved in negative regulation of the survival capacity of activated T cells. May suppress inflammation-related signaling in asthmatic airway epithelium. May play a role in promoting prenatal immune suppression. Regulates RPS6KB1 signaling, which promotes endothelial cell senescence and inflammation and implicates NOS3/eNOS dysfunction. Can inhibit endothelial autophagy independently of its enzymatic activity implicating mTORC2 signaling. Involved in vascular smooth muscle cell senescence and apoptosis independently of its enzymatic activity. The polypeptide is Arginase-2, mitochondrial (ARG2) (Bos taurus (Bovine)).